Reading from the N-terminus, the 459-residue chain is Fe(3+)-Zn(2+) purple acid phosphatase (459 aa).

Residues 1 to 22 form the signal peptide; sequence MGVVKGLLALALVLNVVVVSNG. Gly-23 carries the blocked amino end (Gly) modification. Asn-108 carries N-linked (GlcNAc...) asparagine; partial glycosylation. N-linked (GlcNAc...) asparagine glycosylation occurs at Asn-136. Asp-162 is a binding site for Fe cation. Asn-170 is a glycosylation site (N-linked (GlcNAc...) asparagine). Residues Asp-191 and Tyr-194 each contribute to the Fe cation site. A Zn(2+)-binding site is contributed by Asp-191. Asn-228 provides a ligand contact to Zn(2+). Asn-238 is a glycosylation site (N-linked (GlcNAc...) asparagine). Position 313 (His-313) interacts with Zn(2+). His-323 (proton donor) is an active-site residue. His-350 is a binding site for Zn(2+). His-352 is a Fe cation binding site. N-linked (GlcNAc...) asparagine glycosylation occurs at Asn-423.

This sequence belongs to the metallophosphoesterase superfamily. Purple acid phosphatase family. In terms of assembly, homodimer; disulfide-linked. The cofactor is Fe cation. It depends on Zn(2+) as a cofactor.

It localises to the secreted. It carries out the reaction a phosphate monoester + H2O = an alcohol + phosphate. With respect to regulation, inhibited by compounds CC24201, CC27209, and MO07123. Inhibited by the tetraoxoanions molybdate and phosphate. Not inhibited by EDTA or tartrate. The sequence is that of Fe(3+)-Zn(2+) purple acid phosphatase from Phaseolus vulgaris (Kidney bean).